The primary structure comprises 446 residues: MQNLTDKGAIIFGVQKTSQFANGETATADWVDYHSPFNPRGDGYQDPATSSAGAGSSIASYEWLDLAAGSDTGGSIRGPAAVQGIFGNRPSHGLISLDNAMPLSPKLDTPGFLARDPYLWNAANAALYRENPLSRWSWGDSQPSSILSRNKTLFMNWFNENILPRSSDPLTCSSGLLLHVDGSAGFISRNGYINPPVPPFGFSNGQISVFAETPDSVFPLGQVPAFSSITNHTEYLPVTINVVAAKGCDVLIAKLAEDMVAAGILKVLKIGAGIEGGEILMRRYFVRDDGDEVMSRITSRGRLLFQDWDRLRGILAPTLYVDYTKIGKGKWEAMSADDFMAMVSNDDFLGDLCVKTQHLIGATSWERVSESKVVGHHQLRAAHQVYTSPDLKTVKLRGHSHATNEHYYVKSDGVWKFAGLKPEVRWNEHKFEEVFKGSYTQSEKHS.

Substrate is bound at residue Tyr-323. Residues His-358 and His-383 contribute to the active site. Asn-404 is a substrate binding site.

The protein belongs to the scytalone dehydratase family. In terms of assembly, homotrimer. Each subunit contains an active site, located in the central part of the hydrophobic core of the monomer, which functions independently.

Functionally, scytalone dehydratase-like protein; part of the Pks2 gene cluster that mediates the formation of infectious structures (appressoria), enabling these fungi to kill insects faster. The product of the Pks2 gene cluster is different from the one of Pks1 and has still not been identified. In Metarhizium acridum (strain CQMa 102), this protein is Scytalone dehydratase-like protein Arp1.